Here is a 1135-residue protein sequence, read N- to C-terminus: Envelopment polyprotein (1135 aa).

The N-terminal stretch at 1–35 (MRILKLLELVVKVSLFTIALSSVLLAFLIFRATDA) is a signal peptide. Residues 36–314 (KVEIIRGDHP…KYSKSIYKQT (279 aa)) are Lumenal-facing. The Cell attachment site signature appears at 41 to 43 (RGD). 2 disulfide bridges follow: cysteine 114–cysteine 145 and cysteine 122–cysteine 156. An N-linked (GlcNAc...) asparagine; by host glycan is attached at asparagine 116. The tract at residues 177–195 (LDNKRHFSVGTKFFISESL) is non-covalent dimerization. An N-linked (GlcNAc...) asparagine; by host glycan is attached at asparagine 210. A disulfide bridge links cysteine 224 with cysteine 285. A helical transmembrane segment spans residues 315 to 366 (ACINFSWIRLILIALLIYFPIRWLVNKTTKPLFLWYDLIGLITYPILLLINC). Topologically, residues 367–484 (LWKYFPFKCS…VPGCPFLVTS (118 aa)) are cytoplasmic. The segment at 437 to 484 (LSFSLLKFVTEILIGLIILSQMPMSMAQTTQCLSGCFYVPGCPFLVTS) is signal for signal peptide peptidase. At 485–1067 (KFEKCPERDQ…YFGSFFDTIR (583 aa)) the chain is on the lumenal side. 3 N-linked (GlcNAc...) asparagine; by host glycosylation sites follow: asparagine 588, asparagine 605, and asparagine 980. A helical transmembrane segment spans residues 1068-1088 (VILLIAFIFLVIYFCSILTTI). Topologically, residues 1089 to 1135 (CKGYVKNESYKSRSKIEDDDDSEIKAPMLMKDTMTRRRPPMDFSHLV) are cytoplasmic.

The protein belongs to the tospovirus envelope glycoprotein family. In terms of assembly, homodimer; disulfide-linked. Heterodimer with Glycoprotein C. Interacts with nucleoprotein. Heterodimer with Glycoprotein N. Interacts with nucleoprotein. In terms of processing, specific enzymatic cleavages in vivo yield mature proteins including Glycoprotein N and Glycoprotein C. Post-translationally, glycosylated with O-linked glycans. Glycosylation is essential for proper subcellular location. Cleaved at acidic pH.

The protein resides in the virion membrane. It localises to the host Golgi apparatus membrane. The protein localises to the host endoplasmic reticulum membrane. Functionally, forms the spikes present at the surface of the virion together with Glycoprotein C. They are able to attach the virion to a cell receptor and to promote fusion of membranes after endocytosis of the virion. Plays a role in virus binding and/or entry into the vector midgut. Forms the spikes present at the surface of the virion together with Glycoprotein N. They are able to attach the virion to a cell receptor and to promote fusion of membranes after endocytosis of the virion. Probable class II fusion protein. This is Envelopment polyprotein (GP) from Tomato spotted wilt virus (strain Regular2A) (TSWV).